The chain runs to 427 residues: Enolase (427 aa).

Gln163 is a (2R)-2-phosphoglycerate binding site. The active-site Proton donor is the Glu205. Residues Asp242, Glu285, and Asp312 each contribute to the Mg(2+) site. 4 residues coordinate (2R)-2-phosphoglycerate: Lys337, Arg366, Ser367, and Lys388. Lys337 serves as the catalytic Proton acceptor.

This sequence belongs to the enolase family. It depends on Mg(2+) as a cofactor.

It is found in the cytoplasm. Its subcellular location is the secreted. It localises to the cell surface. The enzyme catalyses (2R)-2-phosphoglycerate = phosphoenolpyruvate + H2O. Its pathway is carbohydrate degradation; glycolysis; pyruvate from D-glyceraldehyde 3-phosphate: step 4/5. Its function is as follows. Catalyzes the reversible conversion of 2-phosphoglycerate (2-PG) into phosphoenolpyruvate (PEP). It is essential for the degradation of carbohydrates via glycolysis. The polypeptide is Enolase (Paraburkholderia phytofirmans (strain DSM 17436 / LMG 22146 / PsJN) (Burkholderia phytofirmans)).